A 548-amino-acid polypeptide reads, in one-letter code: CTP synthase (548 aa).

Residues 1–265 (MTRYIFVTGG…DDIICDKLRI (265 aa)) form an amidoligase domain region. Position 13 (S13) interacts with CTP. S13 is a binding site for UTP. Residues 14 to 19 (SLGKGI) and D71 contribute to the ATP site. Positions 71 and 139 each coordinate Mg(2+). Residues 146–148 (DIE), 186–191 (KTKPTQ), and K222 each bind CTP. UTP contacts are provided by residues 186-191 (KTKPTQ) and K222. One can recognise a Glutamine amidotransferase type-1 domain in the interval 290–541 (NIAMVGKYME…VNAALAYKAA (252 aa)). G351 is a binding site for L-glutamine. C378 serves as the catalytic Nucleophile; for glutamine hydrolysis. Residues 379–382 (LGMQ), E402, and R469 contribute to the L-glutamine site. Residues H514 and E516 contribute to the active site.

It belongs to the CTP synthase family. As to quaternary structure, homotetramer.

It catalyses the reaction UTP + L-glutamine + ATP + H2O = CTP + L-glutamate + ADP + phosphate + 2 H(+). The catalysed reaction is L-glutamine + H2O = L-glutamate + NH4(+). The enzyme catalyses UTP + NH4(+) + ATP = CTP + ADP + phosphate + 2 H(+). The protein operates within pyrimidine metabolism; CTP biosynthesis via de novo pathway; CTP from UDP: step 2/2. Allosterically activated by GTP, when glutamine is the substrate; GTP has no effect on the reaction when ammonia is the substrate. The allosteric effector GTP functions by stabilizing the protein conformation that binds the tetrahedral intermediate(s) formed during glutamine hydrolysis. Inhibited by the product CTP, via allosteric rather than competitive inhibition. Catalyzes the ATP-dependent amination of UTP to CTP with either L-glutamine or ammonia as the source of nitrogen. Regulates intracellular CTP levels through interactions with the four ribonucleotide triphosphates. The protein is CTP synthase of Chromohalobacter salexigens (strain ATCC BAA-138 / DSM 3043 / CIP 106854 / NCIMB 13768 / 1H11).